Consider the following 267-residue polypeptide: Probable ribosomal RNA small subunit methyltransferase A (267 aa).

5 residues coordinate S-adenosyl-L-methionine: Leu12, Gly37, Glu58, Asp83, and Asn100.

It belongs to the class I-like SAM-binding methyltransferase superfamily. rRNA adenine N(6)-methyltransferase family. RsmA subfamily.

The protein localises to the cytoplasm. Its function is as follows. Specifically dimethylates two adjacent adenosines in the loop of a conserved hairpin near the 3'-end of 16S rRNA in the 30S particle. May play a critical role in biogenesis of 30S subunits. In Methanococcus vannielii (strain ATCC 35089 / DSM 1224 / JCM 13029 / OCM 148 / SB), this protein is Probable ribosomal RNA small subunit methyltransferase A.